The following is a 299-amino-acid chain: Protein phosphatase 1 regulatory subunit 3D (299 aa).

Positions 1–22 are disordered; the sequence is MSRGPSSAVLPSALGSRKLGPR. Phosphoserine occurs at positions 23, 25, and 28. The tract at residues 37 to 94 is disordered; that stretch reads EPRACRPPGSPGRAPPPTPAPSGCDPRLRPIILRRARSLPSSPERRQKAAGAPGAACR. Positions 44 to 56 are enriched in pro residues; it reads PGSPGRAPPPTPA. The segment covering 57–67 has biased composition (low complexity); sequence PSGCDPRLRPI. S74 is subject to Phosphoserine. The segment covering 85-94 has biased composition (low complexity); sequence AAGAPGAACR. The PP1-binding motif signature appears at 101-104; sequence LRVR. The residue at position 133 (S133) is a Phosphoserine. The region spanning 169–278 is the CBM21 domain; it reads GERLQRQLVC…NNDHRDYSLT (110 aa).

As to quaternary structure, interacts with PPP1CC catalytic subunit of PP1, and associates with glycogen. Interacts with EPM2A; in the presence of NHLC1/malin the interaction leads to PPP1R3D ubiquitination and autophagic degradation. In terms of tissue distribution, expressed in all tissues tested. High expression in skeletal muscle and heart.

Seems to act as a glycogen-targeting subunit for PP1. PP1 is essential for cell division, and participates in the regulation of glycogen metabolism, muscle contractility and protein synthesis. In Homo sapiens (Human), this protein is Protein phosphatase 1 regulatory subunit 3D (PPP1R3D).